Reading from the N-terminus, the 289-residue chain is Spore coat polysaccharide biosynthesis protein SpsD (289 aa).

Residues Phe137–Lys289 enclose the N-acetyltransferase domain.

It participates in spore coat biogenesis; spore coat polysaccharide biosynthesis. The protein is Spore coat polysaccharide biosynthesis protein SpsD (spsD) of Bacillus subtilis (strain 168).